Consider the following 227-residue polypeptide: Cytochrome c oxidase subunit 2 (227 aa).

Residues 1 to 14 (MAYPFQLGFQDATS) are Mitochondrial intermembrane-facing. Residues 15-45 (PIMEELLHFHDHTLMIVFLISSLVLYIITLM) traverse the membrane as a helical segment. Residues 46-59 (LTTKLTHTSTMDAQ) lie on the Mitochondrial matrix side of the membrane. A helical membrane pass occupies residues 60-87 (EVETVWTILPAIILILIALPSLRILYMM). Over 88 to 227 (DEVNNPSLTV…IFEKWSASML (140 aa)) the chain is Mitochondrial intermembrane. Residues H161, C196, E198, C200, H204, and M207 each coordinate Cu cation. E198 contributes to the Mg(2+) binding site.

Belongs to the cytochrome c oxidase subunit 2 family. Component of the cytochrome c oxidase (complex IV, CIV), a multisubunit enzyme composed of 14 subunits. The complex is composed of a catalytic core of 3 subunits MT-CO1, MT-CO2 and MT-CO3, encoded in the mitochondrial DNA, and 11 supernumerary subunits COX4I, COX5A, COX5B, COX6A, COX6B, COX6C, COX7A, COX7B, COX7C, COX8 and NDUFA4, which are encoded in the nuclear genome. The complex exists as a monomer or a dimer and forms supercomplexes (SCs) in the inner mitochondrial membrane with NADH-ubiquinone oxidoreductase (complex I, CI) and ubiquinol-cytochrome c oxidoreductase (cytochrome b-c1 complex, complex III, CIII), resulting in different assemblies (supercomplex SCI(1)III(2)IV(1) and megacomplex MCI(2)III(2)IV(2)). Found in a complex with TMEM177, COA6, COX18, COX20, SCO1 and SCO2. Interacts with TMEM177 in a COX20-dependent manner. Interacts with COX20. Interacts with COX16. Cu cation is required as a cofactor.

The protein localises to the mitochondrion inner membrane. The enzyme catalyses 4 Fe(II)-[cytochrome c] + O2 + 8 H(+)(in) = 4 Fe(III)-[cytochrome c] + 2 H2O + 4 H(+)(out). Component of the cytochrome c oxidase, the last enzyme in the mitochondrial electron transport chain which drives oxidative phosphorylation. The respiratory chain contains 3 multisubunit complexes succinate dehydrogenase (complex II, CII), ubiquinol-cytochrome c oxidoreductase (cytochrome b-c1 complex, complex III, CIII) and cytochrome c oxidase (complex IV, CIV), that cooperate to transfer electrons derived from NADH and succinate to molecular oxygen, creating an electrochemical gradient over the inner membrane that drives transmembrane transport and the ATP synthase. Cytochrome c oxidase is the component of the respiratory chain that catalyzes the reduction of oxygen to water. Electrons originating from reduced cytochrome c in the intermembrane space (IMS) are transferred via the dinuclear copper A center (CU(A)) of subunit 2 and heme A of subunit 1 to the active site in subunit 1, a binuclear center (BNC) formed by heme A3 and copper B (CU(B)). The BNC reduces molecular oxygen to 2 water molecules using 4 electrons from cytochrome c in the IMS and 4 protons from the mitochondrial matrix. The sequence is that of Cytochrome c oxidase subunit 2 (MT-CO2) from Balaenoptera borealis (Sei whale).